Reading from the N-terminus, the 389-residue chain is Endonuclease 8-like 1 (389 aa).

Residue P2 is the Schiff-base intermediate with DNA of the active site. Residue E3 is the Proton donor of the active site. K54 (proton donor; for beta-elimination activity) is an active-site residue. N176 serves as a coordination point for DNA. The tract at residues 278–389 is disordered; sequence TIWFQGDPGP…PREAGESSAS (112 aa). Residues 322–333 are compositionally biased toward basic residues; that stretch reads SRMRRARKHPPK. Polar residues predominate over residues 336-351; sequence AQQSEGAGLQQNQETP. Basic residues predominate over residues 357-373; sequence GKRRGQRASTGHRRRPK. Residues 374 to 389 are compositionally biased toward basic and acidic residues; sequence TIPDTRPREAGESSAS.

This sequence belongs to the FPG family. As to expression, detected in heart, spleen and lung.

The protein localises to the cytoplasm. It localises to the cytoskeleton. Its subcellular location is the microtubule organizing center. The protein resides in the centrosome. It is found in the nucleus. The protein localises to the chromosome. The catalysed reaction is 2'-deoxyribonucleotide-(2'-deoxyribose 5'-phosphate)-2'-deoxyribonucleotide-DNA = a 3'-end 2'-deoxyribonucleotide-(2,3-dehydro-2,3-deoxyribose 5'-phosphate)-DNA + a 5'-end 5'-phospho-2'-deoxyribonucleoside-DNA + H(+). In terms of biological role, involved in base excision repair of DNA damaged by oxidation or by mutagenic agents. Acts as a DNA glycosylase that recognizes and removes damaged bases. Has a preference for oxidized pyrimidines, such as thymine glycol, formamidopyrimidine (Fapy) and 5-hydroxyuracil. Has marginal activity towards 8-oxoguanine. Has AP (apurinic/apyrimidinic) lyase activity and introduces nicks in the DNA strand. Cleaves the DNA backbone by beta-delta elimination to generate a single-strand break at the site of the removed base with both 3'- and 5'-phosphates. Has DNA glycosylase/lyase activity towards mismatched uracil and thymine, in particular in U:C and T:C mismatches. Specifically binds 5-hydroxymethylcytosine (5hmC), suggesting that it acts as a specific reader of 5hmC. This is Endonuclease 8-like 1 (Neil1) from Mus musculus (Mouse).